Reading from the N-terminus, the 63-residue chain is Large ribosomal subunit protein uL29 (63 aa).

This sequence belongs to the universal ribosomal protein uL29 family.

This is Large ribosomal subunit protein uL29 from Caulobacter vibrioides (strain ATCC 19089 / CIP 103742 / CB 15) (Caulobacter crescentus).